Consider the following 172-residue polypeptide: Ubiquitin-conjugating enzyme E2 PEX4 (172 aa).

The UBC core domain occupies 14-167; sequence SASKRLIKEL…VELWCQDSDS (154 aa). Cys-104 serves as the catalytic Glycyl thioester intermediate.

This sequence belongs to the ubiquitin-conjugating enzyme family.

The catalysed reaction is S-ubiquitinyl-[E1 ubiquitin-activating enzyme]-L-cysteine + [E2 ubiquitin-conjugating enzyme]-L-cysteine = [E1 ubiquitin-activating enzyme]-L-cysteine + S-ubiquitinyl-[E2 ubiquitin-conjugating enzyme]-L-cysteine.. The protein operates within protein modification; protein ubiquitination. Ubiquitin-conjugating enzyme E2 that is essential for peroxisome biogenesis and plays a key role in development, pathogenicity, and cell wall integrity. Required for long and very long-chain fatty acid utilization and is involved in lipid droplet accumulation and the elimination of reactive oxygen species. Controls the expression of proteins involved in protein biosynthesis, fatty acid metabolism, cell wall synthesis, oxidation-reduction reactions, as well as of the enzymes involved in the biosynthesis of the mycotoxin deoxynivalenol (DON), including TRI5, TRI6, and TRI10. This Gibberella zeae (strain ATCC MYA-4620 / CBS 123657 / FGSC 9075 / NRRL 31084 / PH-1) (Wheat head blight fungus) protein is Ubiquitin-conjugating enzyme E2 PEX4.